A 277-amino-acid chain; its full sequence is NADPH-dependent 7-cyano-7-deazaguanine reductase (277 aa).

A substrate-binding site is contributed by 83–85 (VES). 85-86 (SK) is a binding site for NADPH. Residue Cys-184 is the Thioimide intermediate of the active site. Asp-191 serves as the catalytic Proton donor. 223 to 224 (HE) lines the substrate pocket. Position 252–253 (252–253 (RG)) interacts with NADPH.

This sequence belongs to the GTP cyclohydrolase I family. QueF type 2 subfamily. Homodimer.

It is found in the cytoplasm. The catalysed reaction is 7-aminomethyl-7-carbaguanine + 2 NADP(+) = 7-cyano-7-deazaguanine + 2 NADPH + 3 H(+). It participates in tRNA modification; tRNA-queuosine biosynthesis. Its function is as follows. Catalyzes the NADPH-dependent reduction of 7-cyano-7-deazaguanine (preQ0) to 7-aminomethyl-7-deazaguanine (preQ1). In Cupriavidus taiwanensis (strain DSM 17343 / BCRC 17206 / CCUG 44338 / CIP 107171 / LMG 19424 / R1) (Ralstonia taiwanensis (strain LMG 19424)), this protein is NADPH-dependent 7-cyano-7-deazaguanine reductase.